Consider the following 409-residue polypeptide: Na(+)/H(+) antiporter NhaA 2 (409 aa).

Helical transmembrane passes span 10–30 (VAAGLLLLAAVVGLVVANTPA), 60–80 (GLLVVFFFIVAVELKHEFLAG), 89–109 (LVPAIAAVGGVVVPALVYLAI), 118–138 (GWPVPTATDIAFALGVLAVFG), 148–168 (FLLALAVLDDLIAIGIIAVFF), 171–191 (GLDLGALAIAVAGVVLFAVVG), 203–223 (IAVVALLVLVALVTWWATLSS), 224–244 (GIHATIAGVALGFALPRLSGL), 257–277 (IVLPLFAFSAALVAIPAIGLA), 283–303 (FWGIALALPLGKLVGITAGGL), 328–348 (LLGGIGFTVSLLMSELAFAGL), and 356–376 (TLAVLLGSGVAIVAAAVTLSI). Positions 384-409 (AGAAADDDDATRDDFPAHADGGPARA) are disordered.

This sequence belongs to the NhaA Na(+)/H(+) (TC 2.A.33) antiporter family.

It is found in the cell membrane. The enzyme catalyses Na(+)(in) + 2 H(+)(out) = Na(+)(out) + 2 H(+)(in). In terms of biological role, na(+)/H(+) antiporter that extrudes sodium in exchange for external protons. This is Na(+)/H(+) antiporter NhaA 2 from Clavibacter michiganensis subsp. michiganensis (strain NCPPB 382).